Consider the following 421-residue polypeptide: tRNA (guanine(37)-N(1))-methyltransferase (421 aa).

Residues R198, 242–243 (DL), 270–271 (DA), and N293 contribute to the S-adenosyl-L-methionine site.

It belongs to the class I-like SAM-binding methyltransferase superfamily. TRM5/TYW2 family. In terms of assembly, monomer.

It localises to the mitochondrion matrix. It is found in the nucleus. The protein localises to the cytoplasm. The catalysed reaction is guanosine(37) in tRNA + S-adenosyl-L-methionine = N(1)-methylguanosine(37) in tRNA + S-adenosyl-L-homocysteine + H(+). Specifically methylates the N1 position of guanosine-37 in various cytoplasmic and mitochondrial tRNAs. Methylation is not dependent on the nature of the nucleoside 5' of the target nucleoside. This is the first step in the biosynthesis of wybutosine (yW), a modified base adjacent to the anticodon of tRNAs and required for accurate decoding. The polypeptide is tRNA (guanine(37)-N(1))-methyltransferase (Paramecium tetraurelia).